Here is a 143-residue protein sequence, read N- to C-terminus: Large ribosomal subunit protein uL15 (143 aa).

The disordered stretch occupies residues 1–57; the sequence is MQLNNLKPAAGSKHAKRRVGRGIGSGLGKTAGRGHKGQKSRSGGFHKVGFEGGQMPL. Over residues 21-31 the composition is skewed to gly residues; sequence RGIGSGLGKTA.

This sequence belongs to the universal ribosomal protein uL15 family. As to quaternary structure, part of the 50S ribosomal subunit.

In terms of biological role, binds to the 23S rRNA. This chain is Large ribosomal subunit protein uL15, found in Ralstonia nicotianae (strain ATCC BAA-1114 / GMI1000) (Ralstonia solanacearum).